The primary structure comprises 534 residues: MVRNMDLYRRSACDRCRRQKLRCVRPLKHGACEHPNNIEALEPCERCSRAGTPCVSTLPPPRKLSRVERLSGLTSVGQLDNLPLQPLIPKQASSHRPGSGSAKSCIPPTGQNKGINDANAVTGSLSMPLPDHRSGSNVHRQPEARPLKRRSRDIHPFGTGSPPTELLDAPSFSTRRSPIFSQAEPFALNDLDFAMQPHSGGDLPSHGDDLFADVLFSPHQKPPAGPTVGESLFDNTKAQELDTRECCLRRLTSLSSRLFHDFNNTNSVKLPDLLSFSPCRNLTAPNQATDCPQNIIGRVLESSHTFLDILHGLAPDPRPTSSSDSECSYSNYWEDDEFVPISDEMTYNSTSARPEFRDSSDMCASSSNRDSSDLSAASPTIDMPTTLTILTCYTWLLQAYDTIFSQIYSSLLAGTDSTSPSMPPVLPGLQIGGFSLDQHCDLQIEILIQLSARMLDRIEGKLGVTDTKDSNAPVDDQEWSRNGSILDTASASTILDALFKQNHSETRAKPGKGARAGSVRNIMKNIRAELTVHK.

Residues 13-54 (CDRCRRQKLRCVRPLKHGACEHPNNIEALEPCERCSRAGTPC) constitute a DNA-binding region (zn(2)-C6 fungal-type). Disordered stretches follow at residues 88–170 (IPKQ…LDAP) and 350–378 (TSAR…SAAS). Over residues 109–125 (TGQNKGINDANAVTGSL) the composition is skewed to polar residues. Residues 130–146 (PDHRSGSNVHRQPEARP) are compositionally biased toward basic and acidic residues. Low complexity predominate over residues 361 to 378 (DMCASSSNRDSSDLSAAS).

It localises to the nucleus. Its function is as follows. Transcription factor involved in regulation of gene cluster that mediates the biosynthesis of the mycotoxins cytochalasins E and K. The sequence is that of Cytochalasin cluster regulator ccsR from Aspergillus clavatus (strain ATCC 1007 / CBS 513.65 / DSM 816 / NCTC 3887 / NRRL 1 / QM 1276 / 107).